The primary structure comprises 244 residues: Phosphoadenosine 5'-phosphosulfate reductase (244 aa).

Residue cysteine 239 is the Nucleophile; cysteine thiosulfonate intermediate of the active site.

This sequence belongs to the PAPS reductase family. CysH subfamily.

It localises to the cytoplasm. The catalysed reaction is [thioredoxin]-disulfide + sulfite + adenosine 3',5'-bisphosphate + 2 H(+) = [thioredoxin]-dithiol + 3'-phosphoadenylyl sulfate. It functions in the pathway sulfur metabolism; hydrogen sulfide biosynthesis; sulfite from sulfate: step 3/3. Functionally, catalyzes the formation of sulfite from phosphoadenosine 5'-phosphosulfate (PAPS) using thioredoxin as an electron donor. The polypeptide is Phosphoadenosine 5'-phosphosulfate reductase (Buchnera aphidicola subsp. Acyrthosiphon pisum (strain Tuc7)).